Consider the following 775-residue polypeptide: 5-methyltetrahydropteroyltriglutamate--homocysteine methyltransferase (775 aa).

5-methyltetrahydropteroyltri-L-glutamate-binding positions include 16–19 (REMK) and Lys-115. L-homocysteine contacts are provided by residues 435–437 (IGS) and Glu-488. Residues 435–437 (IGS) and Glu-488 contribute to the L-methionine site. Residues 519–520 (RC) and Trp-565 contribute to the 5-methyltetrahydropteroyltri-L-glutamate site. Residue Asp-603 participates in L-homocysteine binding. Asp-603 is an L-methionine binding site. Residue Glu-609 coordinates 5-methyltetrahydropteroyltri-L-glutamate. His-645, Cys-647, and Glu-669 together coordinate Zn(2+). The active-site Proton donor is the His-698. Cys-730 contributes to the Zn(2+) binding site.

It belongs to the vitamin-B12 independent methionine synthase family. It depends on Zn(2+) as a cofactor.

It catalyses the reaction 5-methyltetrahydropteroyltri-L-glutamate + L-homocysteine = tetrahydropteroyltri-L-glutamate + L-methionine. It participates in amino-acid biosynthesis; L-methionine biosynthesis via de novo pathway; L-methionine from L-homocysteine (MetE route): step 1/1. In terms of biological role, catalyzes the transfer of a methyl group from 5-methyltetrahydrofolate to homocysteine resulting in methionine formation. This is 5-methyltetrahydropteroyltriglutamate--homocysteine methyltransferase from Coxiella burnetii (strain CbuG_Q212) (Coxiella burnetii (strain Q212)).